A 227-amino-acid chain; its full sequence is 6-phosphogluconolactonase (227 aa).

The protein belongs to the glucosamine/galactosamine-6-phosphate isomerase family. 6-phosphogluconolactonase subfamily.

The catalysed reaction is 6-phospho-D-glucono-1,5-lactone + H2O = 6-phospho-D-gluconate + H(+). It participates in carbohydrate degradation; pentose phosphate pathway; D-ribulose 5-phosphate from D-glucose 6-phosphate (oxidative stage): step 2/3. Functionally, hydrolysis of 6-phosphogluconolactone to 6-phosphogluconate. This Helicobacter pylori (strain ATCC 700392 / 26695) (Campylobacter pylori) protein is 6-phosphogluconolactonase (pgl).